The primary structure comprises 109 residues: Aquaporin-2 (109 aa).

The Cytoplasmic segment spans residues 1 to 6 (SIAFSR). Residues 7 to 27 (AVLSEFLATLLFVFFGLGSAL) form a helical membrane-spanning segment. Topologically, residues 28-35 (NWPQALPS) are extracellular. The chain crosses the membrane as a helical span at residues 36–54 (VLQIAMAFGLAIGTLVQTL). Over 55–59 (GHISG) the chain is Cytoplasmic. The segment at residues 60 to 69 (AHINPAVTIA) is an intramembrane region (discontinuously helical). The short motif at 63–65 (NPA) is the NPA 1 element. Residues 70-80 (CLVGCHVSFLR) are Cytoplasmic-facing. The helical transmembrane segment at 81 to 102 (ALFYLAAQLLGAVAGAALLHEL) threads the bilayer. Topologically, residues 103-109 (TPPDIRG) are extracellular.

Belongs to the MIP/aquaporin (TC 1.A.8) family. In terms of assembly, homotetramer. Post-translationally, serine phosphorylation is necessary and sufficient for expression at the apical membrane. Endocytosis is not phosphorylation-dependent. N-glycosylated.

The protein resides in the apical cell membrane. Its subcellular location is the basolateral cell membrane. It is found in the cell membrane. The protein localises to the cytoplasmic vesicle membrane. It localises to the golgi apparatus. The protein resides in the trans-Golgi network membrane. The catalysed reaction is H2O(in) = H2O(out). The enzyme catalyses glycerol(in) = glycerol(out). Forms a water-specific channel that provides the plasma membranes of renal collecting duct with high permeability to water, thereby permitting water to move in the direction of an osmotic gradient. Plays an essential role in renal water homeostasis. Could also be permeable to glycerol. The chain is Aquaporin-2 from Procavia capensis habessinica (Abyssinian hyrax).